We begin with the raw amino-acid sequence, 416 residues long: Enterobactin exporter EntS (416 aa).

Over 1 to 21 (MNKQSWLLNLSLLKTHPAFRA) the chain is Cytoplasmic. The chain crosses the membrane as a helical span at residues 22-42 (VFLARFISIVSLGLLGVAVPV). The Periplasmic portion of the chain corresponds to 43 to 55 (QIQMMTHSTWQVG). The helical transmembrane segment at 56 to 76 (LSVTLTGGAMFVGLMVGGVLA) threads the bilayer. Residues 77 to 83 (DRYERKK) are Cytoplasmic-facing. A helical membrane pass occupies residues 84–104 (VILLARGTCGIGFIGLCLNAL). The Periplasmic segment spans residues 105-109 (LPEPS). A helical membrane pass occupies residues 110–130 (LLAIYLLGLWDGFFASLGVTA). The Cytoplasmic portion of the chain corresponds to 131–156 (LLAATPALVGRENLMQAGAITMLTVR). Residues 157-177 (LGSVISPMIGGLLLATGGVAW) traverse the membrane as a helical segment. Residue Asn178 is a topological domain, periplasmic. The helical transmembrane segment at 179 to 199 (YGLAAAGTFITLLPLLSLPAL) threads the bilayer. At 200 to 218 (PPPPQPREHPLKSLLAGFR) the chain is on the cytoplasmic side. The chain crosses the membrane as a helical span at residues 219–239 (FLLASPLVGGIALLGGLLTMA). Over 240–256 (SAVRVLYPALADNWQMS) the chain is Periplasmic. The chain crosses the membrane as a helical span at residues 257 to 277 (AAQIGFLYAAIPLGAAIGALT). Over 278–287 (SGKLAHSARP) the chain is Cytoplasmic. Residues 288–307 (GLLMLLSTLGSFLAIGLFGL) traverse the membrane as a helical segment. The Periplasmic segment spans residues 308–313 (MPMWIL). Residues 314-336 (GVVCLALFGWLSAVSSLLQYTML) traverse the membrane as a helical segment. The Cytoplasmic segment spans residues 337–356 (QTQTPEAMLGRINGLWTAQN). A helical transmembrane segment spans residues 357 to 377 (VTGDAIGAALLGGLGAMMTPV). Residue Ala378 is a topological domain, periplasmic. The chain crosses the membrane as a helical span at residues 379–399 (SASASGFGLLIIGVLLLLVLV). The Cytoplasmic portion of the chain corresponds to 400–416 (ELRRFRQTPPQVTASDG).

It belongs to the major facilitator superfamily. EntS (TC 2.A.1.38) family.

The protein resides in the cell inner membrane. Component of an export pathway for enterobactin. This chain is Enterobactin exporter EntS, found in Escherichia coli O157:H7.